The sequence spans 532 residues: MSVALASEYQLVQNAQLPQRWSQSARKSLAILEATARKEATAQMEAAGGSFCGQFPVDPAFKVLSLEYSAPNPDIARAIRRVDSVPNPPLPSHVVAIQSTAVDADLSLAMGVSLTPGRHTSYLVDARALQQSNSAAVAARKADGDKWGPACDEMFRGCRCVTGQEVVFYTAVKEPAGEVEGGEGSLFKPSFDGPAFRPSWGELSGKATGVVACVLQVPIGKETDIICAEYDNLVSKGQFATVDRFGGDHTVNMTGNALIQNDGKAISKGYAVAHRARVTSNVYGKANDVSLQRLAETVWSVVEKRLSFMPAYRDLVITEQGKPFMLGATATNIISLTENQGVMLHLDTDDGVWTIILWFHRHSGIIAGGEFVLPSLGISFQPLDFTIVVFAANTIVHGTRPLQTTGKIIRWGSSHFLRFKDVNALAQLGAAYGVDELDAKQRDQLEEVDAANSKDGVGAARRVASCMAAERKAAIEAQKAACVRGVVMNPCTGRMPSLLFWQVWRKPPALAVRANAVAGKKRAAADVDFCGA.

Position 335–337 (335–337 (SLT)) interacts with L-ascorbate. Positions 345, 347, and 397 each coordinate Fe cation. Residue 397 to 399 (HGT) participates in L-ascorbate binding.

It belongs to the TET family. Fe(2+) is required as a cofactor.

It is found in the nucleus. The catalysed reaction is a 5-methyl-2'-deoxycytidine in DNA + L-ascorbate + O2 = a (8S,9S)-5-glyceryl-2'-deoxycytidine in DNA + glyoxylate + CO2. The enzyme catalyses a 5-methyl-2'-deoxycytidine in DNA + L-ascorbate + O2 = a (8S,9R)-5-glyceryl-2'-deoxycytidine in DNA + glyoxylate + CO2. Dioxygenase that catalyzes DNA modification by mediating the conversion of the modified genomic base 5-methylcytosine (5mC) into 5-glyceryl-methylcytosine (5gmC). Catalyzes the conjugation of a glyceryl moiety from L-ascorbate (vitamin C) to the methyl group of 5mC through a carbon-carbon bond. 5gmC DNA modification may be required during photosynthesis as an epigenetic mark that couteracts DNA methylation. The sequence is that of 5-methylcytosine-modifying enzyme 1 from Chlamydomonas reinhardtii (Chlamydomonas smithii).